The primary structure comprises 319 residues: tRNA uridine(34) hydroxylase (319 aa).

The Rhodanese domain occupies 124–218 (LDEDTVILDA…YGKNEETKGE (95 aa)). Catalysis depends on Cys178, which acts as the Cysteine persulfide intermediate.

This sequence belongs to the TrhO family.

The catalysed reaction is uridine(34) in tRNA + AH2 + O2 = 5-hydroxyuridine(34) in tRNA + A + H2O. Catalyzes oxygen-dependent 5-hydroxyuridine (ho5U) modification at position 34 in tRNAs. The chain is tRNA uridine(34) hydroxylase from Listeria monocytogenes serotype 4b (strain CLIP80459).